Reading from the N-terminus, the 1000-residue chain is UPF0182 protein SCO5204 (1000 aa).

7 helical membrane-spanning segments follow: residues 26–48, 70–92, 121–143, 177–199, 220–237, 267–289, and 296–318; these read LLLT…GFWT, IGLF…WLAH, WLLL…GQWR, FLLG…THYL, LSVL…AYWL, LPAK…ATLW, and PVIG…PALV. 2 disordered regions span residues 884 to 908 and 943 to 1000; these read AETE…NPTV and EALQ…ADTG. A compositionally biased stretch (acidic residues) spans 888-897; the sequence is QPPDEGDDTT. Basic and acidic residues-rich tracts occupy residues 943–953 and 963–984; these read EALQRAEDAQA and NGDD…DKAG.

The protein belongs to the UPF0182 family.

The protein localises to the cell membrane. The polypeptide is UPF0182 protein SCO5204 (Streptomyces coelicolor (strain ATCC BAA-471 / A3(2) / M145)).